The chain runs to 292 residues: Fat storage-inducing transmembrane protein 1 (292 aa).

Residues 1 to 18 (MERGPVVGAGRGAGARIR) lie on the Lumenal side of the membrane. The helical transmembrane segment at 19–39 (ALLGGLVRVLLWVASALLYFG) threads the bilayer. At 40–54 (SEQAARLLGSPCLRR) the chain is on the cytoplasmic side. A helical transmembrane segment spans residues 55–75 (LYHAWLAAVVIFGPLLQFHVN). Residues 76-94 (PRTIFASHGNFFNIKFVNS) lie on the Lumenal side of the membrane. A helical transmembrane segment spans residues 95–115 (AWGWTCTFLGGFVLLVVFLAT). The Cytoplasmic segment spans residues 116-141 (RRVAVTARHLSRLVVGAAVWRGAGRA). Residues 142–162 (FLLIEDLTGSCFEPLPQGLLL) form a helical membrane-spanning segment. The Lumenal segment spans residues 163-187 (HELPDRRSCLAAGHQWRGYTVSSHT). The active site involves histidine 186. A helical membrane pass occupies residues 188–208 (FLLTFCCLLMAEEAAVFAKYL). Topologically, residues 209–220 (AHGLPAGAPLRL) are cytoplasmic. The helical transmembrane segment at 221–241 (VFLLNVLLLGLWNFLLLCTVI) threads the bilayer. Residues 242-249 (YFHQYTHK) lie on the Lumenal side of the membrane. The active site involves histidine 244. The chain crosses the membrane as a helical span at residues 250–270 (VVGAAVGTFAWYLTYGSWYHQ). Residues 271–292 (PWSPGSPGHGLFPRPHSIHKHN) lie on the Cytoplasmic side of the membrane.

Belongs to the FIT family. FIT1 subfamily.

The protein resides in the endoplasmic reticulum membrane. In terms of biological role, plays an important role in the formation of lipid droplets (LDs) which are storage organelles at the center of lipid and energy homeostasis. Directly binds to diacylglycerol (DAGs) and triacylglycerol. The polypeptide is Fat storage-inducing transmembrane protein 1 (Bos taurus (Bovine)).